The sequence spans 49 residues: Large ribosomal subunit protein bL32 (49 aa).

It belongs to the bacterial ribosomal protein bL32 family.

The sequence is that of Large ribosomal subunit protein bL32 from Nautilia profundicola (strain ATCC BAA-1463 / DSM 18972 / AmH).